A 302-amino-acid chain; its full sequence is RELT-like protein 2 (302 aa).

The chain crosses the membrane as a helical span at residues 15-35; that stretch reads LYMLFLLVLVFFLMGLVGFMI. Disordered stretches follow at residues 47–68, 135–164, 177–212, and 247–302; these read RTSR…DDVN, CSRS…TTVF, RYGL…GQPR, and VPCT…AGGM. Serine 52 is modified (phosphoserine). 2 stretches are compositionally biased toward basic and acidic residues: residues 148–158 and 177–188; these read RSKEGKGRPRP and RYGLHEHRDGSP. The segment covering 277-294 has biased composition (polar residues); that stretch reads QEANGQPTKLDTSGQQDS.

It belongs to the RELT family. In terms of assembly, interacts with RELT, RELL1, OXSR1, PLSCR1 and TRAF2.

It localises to the cell membrane. Induces activation of MAPK14/p38 cascade, when overexpressed. Induces apoptosis, when overexpressed. The protein is RELT-like protein 2 (Rell2) of Rattus norvegicus (Rat).